A 104-amino-acid polypeptide reads, in one-letter code: Endogenous retrovirus group K member 21 Rec protein (104 aa).

The disordered stretch occupies residues 1-48 (MHPSEMQRKAPPRRRRHRNRAPLTHKMNKMVTSEQMKLPSTKKAEPPT). A compositionally biased stretch (basic residues) spans 10–20 (APPRRRRHRNR). Residues 13 to 20 (RRRRHRNR) carry the Nuclear localization signal motif. The Nuclear export signal motif lies at 49–58 (WAQLKKLTQL).

Forms homodimers, homotrimers, and homotetramers via a C-terminal domain. Associates with XPO1 and with ZNF145.

Its subcellular location is the cytoplasm. The protein resides in the nucleus. The protein localises to the nucleolus. Functionally, retroviral replication requires the nuclear export and translation of unspliced, singly-spliced and multiply-spliced derivatives of the initial genomic transcript. Rec interacts with a highly structured RNA element (RcRE) present in the viral 3'LTR and recruits the cellular nuclear export machinery. This permits export to the cytoplasm of unspliced genomic or incompletely spliced subgenomic viral transcripts. This Homo sapiens (Human) protein is Endogenous retrovirus group K member 21 Rec protein (ERVK-21).